Here is a 133-residue protein sequence, read N- to C-terminus: UPF0102 protein Fnod_1509 (133 aa).

Belongs to the UPF0102 family.

The protein is UPF0102 protein Fnod_1509 of Fervidobacterium nodosum (strain ATCC 35602 / DSM 5306 / Rt17-B1).